The sequence spans 431 residues: Adenylosuccinate synthetase (431 aa).

GTP contacts are provided by residues 12 to 18 (GDEGKGK) and 40 to 42 (GHT). Aspartate 13 functions as the Proton acceptor in the catalytic mechanism. The Mg(2+) site is built by aspartate 13 and glycine 40. IMP is bound by residues 13–16 (DEGK), 38–41 (NAGH), threonine 129, arginine 143, glutamine 224, threonine 239, and arginine 303. Histidine 41 acts as the Proton donor in catalysis. 299–305 (VTTGRAR) contributes to the substrate binding site. Residues arginine 305, 331–333 (KLD), and 413–415 (GVG) contribute to the GTP site.

The protein belongs to the adenylosuccinate synthetase family. As to quaternary structure, homodimer. Mg(2+) serves as cofactor.

Its subcellular location is the cytoplasm. It catalyses the reaction IMP + L-aspartate + GTP = N(6)-(1,2-dicarboxyethyl)-AMP + GDP + phosphate + 2 H(+). It participates in purine metabolism; AMP biosynthesis via de novo pathway; AMP from IMP: step 1/2. Its function is as follows. Plays an important role in the de novo pathway of purine nucleotide biosynthesis. Catalyzes the first committed step in the biosynthesis of AMP from IMP. In Mycobacteroides abscessus (strain ATCC 19977 / DSM 44196 / CCUG 20993 / CIP 104536 / JCM 13569 / NCTC 13031 / TMC 1543 / L948) (Mycobacterium abscessus), this protein is Adenylosuccinate synthetase.